The primary structure comprises 467 residues: MSERTLFDKVWDAHTVRILPSGQTQLFIGLHLIHEVTSPQAFAMLRERHLPVLFPERTVATVDHIIPTDNRARPFADPLAEEMIQELERNCRQYGIRFYNSGSGRQGIVHVIAPEQGLTLPGMTIACGDSHTSTHGAFGAIAFGIGTSQVRDVLATQTLALSKLKVRRIEIHGKLGPGVYAKDVILHIIRKLGVKGGVGYAYEYGGSAIEAMSMEERMTLCNMSIEGGARCGYVNPDAVTFEYLRGREFAPQGSDWEEAVAWWKSLASDGNARYDDVVVFQAADIAPTVTWGITPGQGIGVDERIPAPEDLPESERELAKEAYAYMDLQPGDPIVGTPVDVCFIGSCTNGRLSDLREAAKIAKGRRVAPGVKAFVVPGSERVKQEAEQEGLREIFEAAGFEWRDPGCSMCLAMNPDRLVGRQISASSSNRNFKGRQGSPSGRTLLMSPAMVAAAAVSGKVVDVRTLL.

3 residues coordinate [4Fe-4S] cluster: Cys-347, Cys-407, and Cys-410.

This sequence belongs to the aconitase/IPM isomerase family. LeuC type 1 subfamily. In terms of assembly, heterodimer of LeuC and LeuD. The cofactor is [4Fe-4S] cluster.

It catalyses the reaction (2R,3S)-3-isopropylmalate = (2S)-2-isopropylmalate. It participates in amino-acid biosynthesis; L-leucine biosynthesis; L-leucine from 3-methyl-2-oxobutanoate: step 2/4. Functionally, catalyzes the isomerization between 2-isopropylmalate and 3-isopropylmalate, via the formation of 2-isopropylmaleate. This Synechococcus sp. (strain JA-2-3B'a(2-13)) (Cyanobacteria bacterium Yellowstone B-Prime) protein is 3-isopropylmalate dehydratase large subunit.